A 401-amino-acid chain; its full sequence is MEEQQPEPKSQRDSGLGAVAAAAPSGLSLSLSPGASGSSGSDGDSVPVSPQPAPPSPPAAPCLPPLAHHPHLPPHPPPPPPPPPPPPQHLAAPAHQPQPAAQLHRTTNFFIDNILRPDFGCKKEQPLPQLLVASAAAGGGAAAGGGSRVERDRGQTGAGRDPVHSLGTRASGAASLLCAPDANCGPPDGSQPATAVSAGASKAGNPAAAAAAAAAAAAAAVAAAAAAASKPSDSGGGSGGNAGSPGAQGAKFPEHNPAILLMGSANGGPVVKTDSQQPLVWPAWVYCTRYSDRPSSGPRTRKLKKKKNEKEDKRPRTAFTAEQLQRLKAEFQANRYITEQRRQTLAQELSLNESQIKIWFQNKRAKIKKATGIKNGLALHLMAQGLYNHSTTTVQDKDESE.

Disordered stretches follow at residues 1–102 (MEEQ…PAAQ), 138–167 (GGGA…HSLG), 229–253 (SKPS…AKFP), and 293–315 (RPSS…DKRP). Over residues 13–48 (DSGLGAVAAAAPSGLSLSLSPGASGSSGSDGDSVPV) the composition is skewed to low complexity. Pro residues-rich tracts occupy residues 49 to 64 (SPQP…PCLP) and 73 to 88 (PPHP…PPPQ). The span at 89 to 102 (HLAAPAHQPQPAAQ) shows a compositional bias: low complexity. Gly residues-rich tracts occupy residues 138–147 (GGGAAAGGGS) and 234–243 (SGGGSGGNAG). Residues 312–371 (DKRPRTAFTAEQLQRLKAEFQANRYITEQRRQTLAQELSLNESQIKIWFQNKRAKIKKAT) constitute a DNA-binding region (homeobox).

The protein belongs to the engrailed homeobox family.

The protein localises to the nucleus. Its function is as follows. Required for proper formation of the apical ectodermal ridge and correct dorsal-ventral patterning in the limb. The protein is Homeobox protein engrailed-1 (En1) of Mus musculus (Mouse).